The following is a 234-amino-acid chain: Enterobactin synthase component D (234 aa).

Mg(2+)-binding residues include Asp107, Glu109, and Glu152.

Belongs to the P-Pant transferase superfamily. EntD family. EntB, EntD, EntE, and EntF form a multienzyme complex called enterobactin synthase. Mg(2+) serves as cofactor.

It localises to the membrane. The enzyme catalyses apo-[aryl-carrier protein] + CoA = holo-[aryl-carrier protein] + adenosine 3',5'-bisphosphate + H(+). It carries out the reaction apo-[peptidyl-carrier protein] + CoA = holo-[peptidyl-carrier protein] + adenosine 3',5'-bisphosphate + H(+). Its pathway is siderophore biosynthesis; enterobactin biosynthesis. In terms of biological role, involved in the biosynthesis of the siderophore enterobactin (enterochelin), which is a macrocyclic trimeric lactone of N-(2,3-dihydroxybenzoyl)-serine. The serine trilactone serves as a scaffolding for the three catechol functionalities that provide hexadentate coordination for the tightly ligated iron(2+) atoms. Plays an essential role in the assembly of the enterobactin by catalyzing the transfer of the 4'-phosphopantetheine (Ppant) moiety from coenzyme A to the apo-domains of both EntB (ArCP domain) and EntF (PCP domain) to yield their holo-forms which make them competent for the activation of 2,3-dihydroxybenzoate (DHB) and L-serine, respectively. This is Enterobactin synthase component D from Salmonella typhi.